Consider the following 121-residue polypeptide: ATP synthase epsilon chain (121 aa).

This sequence belongs to the ATPase epsilon chain family. As to quaternary structure, F-type ATPases have 2 components, CF(1) - the catalytic core - and CF(0) - the membrane proton channel. CF(1) has five subunits: alpha(3), beta(3), gamma(1), delta(1), epsilon(1). CF(0) has three main subunits: a, b and c.

The protein resides in the cell membrane. Produces ATP from ADP in the presence of a proton gradient across the membrane. The sequence is that of ATP synthase epsilon chain from Mycobacterium sp. (strain JLS).